A 277-amino-acid polypeptide reads, in one-letter code: Small ribosomal subunit protein uS2 (277 aa).

Residues 255-277 form a disordered region; sequence AVATTDEASAPSAAATETTTEEG. The segment covering 257–277 has biased composition (low complexity); the sequence is ATTDEASAPSAAATETTTEEG.

It belongs to the universal ribosomal protein uS2 family.

The polypeptide is Small ribosomal subunit protein uS2 (Mycobacteroides abscessus (strain ATCC 19977 / DSM 44196 / CCUG 20993 / CIP 104536 / JCM 13569 / NCTC 13031 / TMC 1543 / L948) (Mycobacterium abscessus)).